The chain runs to 763 residues: High glucose sensor RGT2 (763 aa).

The disordered stretch occupies residues 1–28; it reads MNDSQNCLRQREENSHLNPGNDFGHHQG. The Cytoplasmic segment spans residues 1 to 99; it reads MNDSQNCLRQ…PLPLRSNVMS (99 aa). A helical transmembrane segment spans residues 100–120; it reads VLVGIFVAVGGFLFGYDTGLI. Topologically, residues 121–144 are extracellular; sequence NSITDMPYVKTYIAPNHSYFTTSQ. N-linked (GlcNAc...) asparagine glycosylation occurs at asparagine 136. Residues 145–165 form a helical membrane-spanning segment; it reads IAILVSFLSLGTFFGALIAPY. At 166 to 175 the chain is on the cytoplasmic side; that stretch reads ISDSYGRKPT. The chain crosses the membrane as a helical span at residues 176-196; the sequence is IMFSTAVIFSIGNSLQVASGG. Leucine 197 is a topological domain (extracellular). A helical transmembrane segment spans residues 198–218; that stretch reads VLLIVGRVISGIGIGIISAVV. The Cytoplasmic portion of the chain corresponds to 219–231; the sequence is PLYQAEAAQKNLR. The chain crosses the membrane as a helical span at residues 232 to 252; sequence GAIISSYQWAITIGLLVSSAV. At 253–266 the chain is on the extracellular side; it reads SQGTHSKNGPSSYR. Residues 267 to 287 traverse the membrane as a helical segment; it reads IPIGLQYVWSSILAVGMIFLP. At 288 to 357 the chain is on the cytoplasmic side; sequence ESPRYYVLKD…SENRPKQILR (70 aa). The helical transmembrane segment at 358-378 threads the bilayer; the sequence is IFTGIAIQAFQQASGINFIFY. Residues 379–393 lie on the Extracellular side of the membrane; sequence YGVNFFNNTGVDNSY. Asparagine 385 is a glycosylation site (N-linked (GlcNAc...) asparagine). Residues 394 to 414 traverse the membrane as a helical segment; it reads LVSFISYAVNVAFSIPGMYLV. The Cytoplasmic portion of the chain corresponds to 415–421; the sequence is DRIGRRP. The chain crosses the membrane as a helical span at residues 422-442; that stretch reads VLLAGGVIMAIANLVIAIVGV. Topologically, residues 443-452 are extracellular; that stretch reads SEGKTVVASK. Residues 453–473 traverse the membrane as a helical segment; the sequence is IMIAFICLFIAAFSATWGGVV. Over 474–491 the chain is Cytoplasmic; that stretch reads WVVSAELYPLGVRSKCTA. Residues 492–512 traverse the membrane as a helical segment; it reads ICAAANWLVNFTCALITPYIV. The Extracellular segment spans residues 513-524; sequence DVGSHTSSMGPK. The helical transmembrane segment at 525-545 threads the bilayer; that stretch reads IFFIWGGLNVVAVIVVYFAVY. Topologically, residues 546–763 are cytoplasmic; sequence ETRGLTLEEI…SKHSQYTSPQ (218 aa). The span at 725-737 shows a compositional bias: low complexity; it reads SSTTSNDTSFSPS. The segment at 725 to 763 is disordered; it reads SSTTSNDTSFSPSHNSNARTSSNWTSDLASKHSQYTSPQ. A compositionally biased stretch (polar residues) spans 738–763; the sequence is HNSNARTSSNWTSDLASKHSQYTSPQ.

Belongs to the major facilitator superfamily. Sugar transporter (TC 2.A.1.1) family. As to quaternary structure, interacts with YCK1. Interacts with MTH1 and STD1. In terms of processing, phosphorylated in the C-terminal tail on Yck consensus sites in a yeast casein kinases YCK1 and YCK2 (Yck)-dependent manner. This phosphorylation is required for interaction with HXT corepressors MTH1 and STD1 and ultimately HXT expression.

It localises to the cell membrane. Functionally, low-affinity high glucose sensor that is part of the sensor/receptor-repressor (SSR) glucose-signaling pathway, which detects extracellular glucose and induces expression of glucose transporters that bring glucose into the cell. The transporter-like sensor generates an intracellular signal in the presence of high levels of glucose to promote high glucose-induced expression of HXT1. Binding of glucose to the RGT2 transmembrane domain activates a downstream signaling cascade, leading to phosphorylation of the RGT1 corepressors MTH1 and STD1, targeting them for SCF(Grr1)-dependent ubiquitination and degradation. Depletion of the corepressors robs RGT1 of its ability to repress expression of HXT genes, leading to accumulation of glucose transporters in the plasma membrane. Even though RGT2 is similar to glucose transporters, it appears to be unable to transport glucose. In Saccharomyces cerevisiae (strain ATCC 204508 / S288c) (Baker's yeast), this protein is High glucose sensor RGT2.